The sequence spans 1004 residues: Kinesin-like protein KIN-14R (1004 aa).

3 disordered regions span residues 1–21, 61–90, and 110–169; these read MEEE…RIGD, PYVD…MQHD, and ELFS…ATMG. Acidic residues predominate over residues 63–75; it reads VDDDDDGNSEEEN. The span at 115-125 shows a compositional bias: pro residues; the sequence is PSPPQGPPSPS. Coiled-coil stretches lie at residues 189–230 and 266–338; these read CGQL…AQAS and LNDL…LYNK. The Kinesin motor domain maps to 345 to 671; that stretch reads NIRVFCRCRP…LNFASRVRGI (327 aa). 428 to 435 contributes to the ATP binding site; that stretch reads GQTGTGKT. Residues 691–742 are a coiled coil; it reads MAGRAKQDSKNKDAQIKSMEETIQSLEAKNKAKDLLTMNLQEKIKELEAQLL. Disordered regions lie at residues 759–791 and 946–1004; these read DHLH…STAE and SGRR…RQLN. The segment covering 948 to 958 has biased composition (low complexity); the sequence is RRAGAGVAGTT. Residues 995–1004 show a composition bias toward polar residues; it reads NNGTSLRQLN.

This sequence belongs to the TRAFAC class myosin-kinesin ATPase superfamily. Kinesin family. KIN-14 subfamily.

In Oryza sativa subsp. japonica (Rice), this protein is Kinesin-like protein KIN-14R.